We begin with the raw amino-acid sequence, 591 residues long: MAGELRGSRGPLQRIQIAPREAPNLHLTMGNWLVNHWLSVLFLVSWLGLNIFLFVYAFLNYEKSDKYYYTREILGTALALARASALCLNFNSMMILIPVCRNLLSFLRGTCSFCNRTLRKPLDHNLTFHKLVAYMICIFTVIHIIAHLFNFERYRRSQQAMDGSLASVLSSLSHPEKEDSWLNPIQSPNMTVMYAAFTSIAGLTGVIATVALVLMVTSAMEFIRRNYFELFWYTHHLFIVYIICLGIHGLGGIVRGQTEESLGESHPHNCSHSFHEWDDHKGSCRHPHFAGHPPESWKWILAPIAFYIFERILRFYRSQQKVVITKVVMHPSNVLELQMRKRGFSMEVGQYIFVNCPSISFLEWHPFTLTSAPEEEFFSVHIRAAGDWTRNLIRTFEQQHSPMPRIEVDGPFGTVSEDVFQYEVAVLVGAGIGVTPFASILKSIWYKFQRADNKLKTQKIYFYWICRETGAFAWFNNLLNSLEQEMEELGKMDFLNYRLFLTGWDSNIAGHAALNFDRATDILTGLKQKTSFGRPMWDNEFSRIATAHPKSAVGVFLCGPRTLAKSLRKRCQRYSSLDPRKVQFYFNKETF.

Residues 1 to 36 lie on the Cytoplasmic side of the membrane; the sequence is MAGELRGSRGPLQRIQIAPREAPNLHLTMGNWLVNH. A helical transmembrane segment spans residues 37–59; it reads WLSVLFLVSWLGLNIFLFVYAFL. The Extracellular portion of the chain corresponds to 60 to 72; it reads NYEKSDKYYYTRE. A helical transmembrane segment spans residues 73 to 97; it reads ILGTALALARASALCLNFNSMMILI. Residues 82–316 form the Ferric oxidoreductase domain; sequence RASALCLNFN…YIFERILRFY (235 aa). Residues 98 to 130 lie on the Cytoplasmic side of the membrane; the sequence is PVCRNLLSFLRGTCSFCNRTLRKPLDHNLTFHK. Heme is bound by residues His-129 and His-143. Residues 131 to 151 traverse the membrane as a helical segment; it reads LVAYMICIFTVIHIIAHLFNF. Topologically, residues 152–195 are extracellular; that stretch reads ERYRRSQQAMDGSLASVLSSLSHPEKEDSWLNPIQSPNMTVMYA. The N-linked (GlcNAc...) asparagine glycan is linked to Asn-189. The chain crosses the membrane as a helical span at residues 196-216; the sequence is AFTSIAGLTGVIATVALVLMV. Residues 217 to 234 are Cytoplasmic-facing; that stretch reads TSAMEFIRRNYFELFWYT. Residues 235 to 255 form a helical membrane-spanning segment; the sequence is HHLFIVYIICLGIHGLGGIVR. Heme is bound by residues His-236 and His-248. The Extracellular segment spans residues 256-423; sequence GQTEESLGES…TVSEDVFQYE (168 aa). Asn-269 is a glycosylation site (N-linked (GlcNAc...) asparagine). The FAD-binding FR-type domain occupies 317–418; sequence RSQQKVVITK…DGPFGTVSED (102 aa). 365 to 371 serves as a coordination point for FAD; sequence HPFTLTS. Residues 424-444 form a helical membrane-spanning segment; sequence VAVLVGAGIGVTPFASILKSI. The segment at 424–563 is interaction with NOXO1; it reads VAVLVGAGIG…GVFLCGPRTL (140 aa). Residues 445-591 lie on the Cytoplasmic side of the membrane; the sequence is WYKFQRADNK…VQFYFNKETF (147 aa). Thr-457 is subject to Phosphothreonine.

NOX1, NOXA1, NOXO1, RAC1 and CYBA forms a functional multimeric complex supporting ROS production. Interacts with NOXO1. Interacts (via FAD-binding FR-type domain) with ARHGEF7 (via PH domain). Interacts with NOXA1. It depends on FAD as a cofactor. Post-translationally, phosphorylation at Thr-457 mediated by PKC/PRKBC positively regulates its interaction with NOXA1 and enzyme activity. As to expression, expressed in colon and vascular smooth muscle cells (VSMC).

The protein resides in the cell projection. It localises to the invadopodium membrane. Its subcellular location is the cell membrane. The enzyme catalyses NADPH + 2 O2 = 2 superoxide + NADP(+) + H(+). With respect to regulation, the oxidase activity is potentiated by NOXA1 and NOXO1. In terms of biological role, NADPH oxidase that catalyzes the generation of superoxide from molecular oxygen utilizing NADPH as an electron donor. This chain is NADPH oxidase 1 (Nox1), found in Mus musculus (Mouse).